The primary structure comprises 422 residues: MSSNKGNGRLPSLKDSSSNGGGSAKPSLKFKPKAVARKSKEEREAAASKVKLEEESKRGNDKKHFNNKNKRVTGAGGQQRRMAKYLNNTHVISSGPLAAGNFVSEKGDLRRGFIKSEGSGSSLVQKGLETIDNGAESSENEAEDDDNEGVASKSKKKFNMGKEFEARNLIEDEDDGESEKSSDVDMDDEEWRSKRIEQLFPVRPVRVRHEDVETVKREIQEALSEKPTREPTPSVKTEPVGTGLQSYLEERERQVNEKLADLGLEKEFQSVDGKEAAAELELLNADHQHILRKLKKMNNKPERFMVFQLPTRLPAFERPAVKEEKEDMETQASDPSKKKKNIKKKDTKDALSTRELAGKVGSIRVHKSGKLSVKIGNVVMDIGKGAETTFLQDVIALSIADDASSAELLGRVDGKIVVTPQI.

Disordered regions lie at residues 1–80 (MSSN…GQQR), 115–190 (KSEG…DDEE), 219–244 (IQEA…GTGL), and 318–350 (RPAV…TKDA). Residues 25–29 (KPSLK) carry the Nuclear localization signal motif. Over residues 28-37 (LKFKPKAVAR) the composition is skewed to basic residues. The span at 38–64 (KSKEEREAAASKVKLEEESKRGNDKKH) shows a compositional bias: basic and acidic residues. Residues serine 137 and serine 138 each carry the phosphoserine modification. The span at 138–148 (SENEAEDDDNE) shows a compositional bias: acidic residues. Positions 160–170 (MGKEFEARNLI) are enriched in basic and acidic residues. 3 positions are modified to phosphoserine: serine 178, serine 182, and serine 224. Basic and acidic residues predominate over residues 219–229 (IQEALSEKPTR). Residues threonine 228 and threonine 232 each carry the phosphothreonine modification.

It belongs to the eukaryotic RPC4/POLR3D RNA polymerase subunit family. Component of the RNA polymerase III (Pol III) complex consisting of 17 subunits. Interacts with RPC37/RPC5. RPC53/RPC4, RPC37/RPC5 and RPC11/RPC10 probably form a Pol III subcomplex.

The protein localises to the nucleus. DNA-dependent RNA polymerase catalyzes the transcription of DNA into RNA using the four ribonucleoside triphosphates as substrates. Specific peripheric component of RNA polymerase III which synthesizes small RNAs, such as 5S rRNA and tRNAs. Essential for tRNA synthesis. The RPC53/RPC4-RPC37/RPC5 subcomplex is required for terminator recognition and reinitiation. The polypeptide is DNA-directed RNA polymerase III subunit RPC4 (RPC53) (Saccharomyces cerevisiae (strain ATCC 204508 / S288c) (Baker's yeast)).